The following is an 82-amino-acid chain: Turripeptide OL139 (82 aa).

The interval 58–82 is disordered; it reads HRTTRDTADKTHGGSQRDRFFQSIA.

Contains 6 disulfide bonds. Expressed by the venom duct.

The protein localises to the secreted. Its function is as follows. Acts as a neurotoxin by inhibiting an ion channel. This chain is Turripeptide OL139, found in Iotyrris olangoensis (Sea snail).